The chain runs to 428 residues: D-amino acid dehydrogenase (428 aa).

3 to 17 (VVVLGSGVVGVTSAY) provides a ligand contact to FAD.

This sequence belongs to the DadA oxidoreductase family. FAD is required as a cofactor.

It carries out the reaction a D-alpha-amino acid + A + H2O = a 2-oxocarboxylate + AH2 + NH4(+). It participates in amino-acid degradation; D-alanine degradation; NH(3) and pyruvate from D-alanine: step 1/1. In terms of biological role, oxidative deamination of D-amino acids. This is D-amino acid dehydrogenase from Paraburkholderia phymatum (strain DSM 17167 / CIP 108236 / LMG 21445 / STM815) (Burkholderia phymatum).